A 430-amino-acid polypeptide reads, in one-letter code: Glutamate-1-semialdehyde 2,1-aminomutase (430 aa).

N6-(pyridoxal phosphate)lysine is present on K265.

Belongs to the class-III pyridoxal-phosphate-dependent aminotransferase family. HemL subfamily. Pyridoxal 5'-phosphate serves as cofactor.

The protein localises to the cytoplasm. It catalyses the reaction (S)-4-amino-5-oxopentanoate = 5-aminolevulinate. The protein operates within porphyrin-containing compound metabolism; protoporphyrin-IX biosynthesis; 5-aminolevulinate from L-glutamyl-tRNA(Glu): step 2/2. The sequence is that of Glutamate-1-semialdehyde 2,1-aminomutase from Caldivirga maquilingensis (strain ATCC 700844 / DSM 13496 / JCM 10307 / IC-167).